Here is a 402-residue protein sequence, read N- to C-terminus: Beta sliding clamp (402 aa).

Belongs to the beta sliding clamp family. As to quaternary structure, forms a ring-shaped head-to-tail homodimer around DNA which binds and tethers DNA polymerases and other proteins to the DNA. The DNA replisome complex has a single clamp-loading complex (3 tau and 1 each of delta, delta', psi and chi subunits) which binds 3 Pol III cores (1 core on the leading strand and 2 on the lagging strand) each with a beta sliding clamp dimer. Additional proteins in the replisome are other copies of gamma, psi and chi, Ssb, DNA helicase and RNA primase.

The protein resides in the cytoplasm. Confers DNA tethering and processivity to DNA polymerases and other proteins. Acts as a clamp, forming a ring around DNA (a reaction catalyzed by the clamp-loading complex) which diffuses in an ATP-independent manner freely and bidirectionally along dsDNA. Initially characterized for its ability to contact the catalytic subunit of DNA polymerase III (Pol III), a complex, multichain enzyme responsible for most of the replicative synthesis in bacteria; Pol III exhibits 3'-5' exonuclease proofreading activity. The beta chain is required for initiation of replication as well as for processivity of DNA replication. The chain is Beta sliding clamp (dnaN) from Mycobacterium bovis (strain ATCC BAA-935 / AF2122/97).